A 135-amino-acid chain; its full sequence is ATP synthase epsilon chain (135 aa).

It belongs to the ATPase epsilon chain family. F-type ATPases have 2 components, CF(1) - the catalytic core - and CF(0) - the membrane proton channel. CF(1) has five subunits: alpha(3), beta(3), gamma(1), delta(1), epsilon(1). CF(0) has three main subunits: a, b and c.

Its subcellular location is the cell inner membrane. In terms of biological role, produces ATP from ADP in the presence of a proton gradient across the membrane. This is ATP synthase epsilon chain from Rhizobium rhizogenes (strain K84 / ATCC BAA-868) (Agrobacterium radiobacter).